The following is a 326-amino-acid chain: MGKTVKVAVTGAAGQIGYSLLFRIASGQMFGTDTAVEIQMLELEAAIPAAKGVIMELEDCAFPLLQKVTVSSDLDIAFKDINWALLVGSVPRKAGMERGDLLKINGGIFINQGKAIEKNAASDVRVLVVGNPCNTNCLIAMNNAKGIPSDRWFAMTKLDENRAKSQLASKAGVPVKEVTHLGIWGNHSSTQYPDFYNAKISGKPVTDVISDHEWLKGDFIKNVQQRGAEIIKARGASSAASAANGVVDTVRAIITPTASGDAFSAAIASDGSYGTEKGLIFGFPLKSDGKKVGIVQGLPFNDFAKEKFKTTHDELISERNEVKDML.

11-17 is a binding site for NAD(+); sequence GAAGQIG. Residues Arg92 and Arg98 each contribute to the substrate site. Residues Asn105, Gln112, and 129 to 131 each bind NAD(+); that span reads VGN. Asn131 and Arg162 together coordinate substrate. The active-site Proton acceptor is His187.

This sequence belongs to the LDH/MDH superfamily. MDH type 2 family.

The catalysed reaction is (S)-malate + NAD(+) = oxaloacetate + NADH + H(+). Functionally, catalyzes the reversible oxidation of malate to oxaloacetate. The polypeptide is Malate dehydrogenase (Leptospira borgpetersenii serovar Hardjo-bovis (strain JB197)).